Here is a 24-residue protein sequence, read N- to C-terminus: Humanin (24 aa).

The segment at 1–12 is sufficient to interact with BID and BIM and to suppress BID and BIM activity; it reads MAPRGFSCLLLL. Residues 3–19 are sufficient for neuroprotective activity; that stretch reads PRGFSCLLLLTSEIDLP. The interval 5-12 is sufficient to interact with MPP8; that stretch reads GFSCLLLL. Required for secretion stretches follow at residues 9 to 11 and 19 to 20; these read LLL and PV.

Homodimer. Interacts with amyloid-beta protein 42 (Abeta42); the interaction prevents Abeta42 fibril formation. Interacts with BAX; forms fibers with BAX which results in BAX conformational changes and sequestering of BAX into the fibers, preventing BAX activation. Interacts with both full-length BID and cleaved BID p15; forms fibers with BID which results in BID conformational changes and sequestering of BID into the fibers, preventing BID activation. Interacts with BIM isoform BimEL but not with BIM isoforms BimL or BimS; the interaction prevents BIM-induced apoptosis. Interacts with IGFBP3; competes with importin KPNB1 for binding to IGFBP3, blocking IGFBP3 nuclear import. Interacts with TRIM11. Interacts with MPP8. As to expression, expressed in testis, seminal plasma and sperm (at protein level). Higher seminal plasma levels are associated with normospermia than with oligospermia, asthenospermia or oligoasthenospermia (at protein level). Higher sperm levels are associated with normospermia than with asthenospermia (at protein level). Expressed in retinal epithelial cells (at protein level). Expressed in the heart, skeletal muscle, kidney and liver. Lesser but significant expression is observed in the brain and the gastrointestinal tract. Expressed in the AD brain, where it is found in some of the large intact neurons of the occipital lobes and small and round reactive glial cells in the hippocampus.

The protein localises to the secreted. It is found in the cytoplasm. The protein resides in the cell projection. Its subcellular location is the cilium. It localises to the flagellum. The protein localises to the nucleus. It is found in the mitochondrion. Functionally, plays a role as a neuroprotective factor. Protects against neuronal cell death induced by multiple different familial Alzheimer disease genes and amyloid-beta proteins in Alzheimer disease. Mediates its neuroprotective effect by interacting with a receptor complex composed of IL6ST/GP130, IL27RA/WSX1 and CNTFR. Also acts as a ligand for G-protein coupled receptors FPR2/FPRL1 and FPR3/FPRL2. Inhibits amyloid-beta protein 40 fibril formation. Also inhibits amyloid-beta protein 42 fibril formation. Suppresses apoptosis by binding to BAX and preventing the translocation of BAX from the cytosol to mitochondria. Also suppresses apoptosis by binding to BID and inhibiting the interaction of BID with BAX and BAK which prevents oligomerization of BAX and BAK and suppresses release of apoptogenic proteins from mitochondria. Forms fibers with BAX and also with BID, inducing BAX and BID conformational changes and sequestering them into the fibers which prevents their activation. Can also suppress apoptosis by interacting with BIM isoform BimEL, inhibiting BimEL-induced activation of BAX, blocking oligomerization of BAX and BAK, and preventing release of apoptogenic proteins from mitochondria. Plays a role in up-regulation of anti-apoptotic protein BIRC6/APOLLON, leading to inhibition of neuronal cell death. Binds to IGFBP3 and specifically blocks IGFBP3-induced cell death. Competes with importin KPNB1 for binding to IGFBP3 which is likely to block IGFBP3 nuclear import. Induces chemotaxis of mononuclear phagocytes via FPR2/FPRL1. Reduces aggregation and fibrillary formation by suppressing the effect of APP on mononuclear phagocytes and acts by competitively inhibiting the access of FPR2 to APP. Protects retinal pigment epithelium (RPE) cells against oxidative stress-induced and endoplasmic reticulum (ER) stress-induced apoptosis. Promotes mitochondrial biogenesis in RPE cells following oxidative stress and promotes STAT3 phosphorylation which leads to inhibition of CASP3 release. Also reduces CASP4 levels in RPE cells, suppresses ER stress-induced mitochondrial superoxide production and plays a role in up-regulation of mitochondrial glutathione. Reduces testicular hormone deprivation-induced apoptosis of germ cells at the nonandrogen-sensitive stages of the seminiferous epithelium cycle. Protects endothelial cells against free fatty acid-induced inflammation by suppressing oxidative stress, reducing expression of TXNIP and inhibiting activation of the NLRP3 inflammasome which inhibits expression of pro-inflammatory cytokines IL1B and IL18. Protects against high glucose-induced endothelial cell dysfunction by mediating activation of ERK5 which leads to increased expression of transcription factor KLF2 and prevents monocyte adhesion to endothelial cells. Inhibits the inflammatory response in astrocytes. Increases the expression of PPARGC1A/PGC1A in pancreatic beta cells which promotes mitochondrial biogenesis. Increases insulin sensitivity. The protein is Humanin of Homo sapiens (Human).